The chain runs to 185 residues: Shikimate kinase (185 aa).

12–17 (GSGKTT) serves as a coordination point for ATP. Thr16 contributes to the Mg(2+) binding site. Positions 34, 58, and 79 each coordinate substrate. Arg116 is a binding site for ATP. Arg135 is a binding site for substrate.

Belongs to the shikimate kinase family. Monomer. Requires Mg(2+) as cofactor.

Its subcellular location is the cytoplasm. It carries out the reaction shikimate + ATP = 3-phosphoshikimate + ADP + H(+). The protein operates within metabolic intermediate biosynthesis; chorismate biosynthesis; chorismate from D-erythrose 4-phosphate and phosphoenolpyruvate: step 5/7. In terms of biological role, catalyzes the specific phosphorylation of the 3-hydroxyl group of shikimic acid using ATP as a cosubstrate. The polypeptide is Shikimate kinase (Corynebacterium jeikeium (strain K411)).